The chain runs to 208 residues: Fibroblast growth factor 6 (208 aa).

The N-terminal stretch at 1-37 is a signal peptide; sequence MALGQKLFITMSRGAGRLQGTLWALVFLGILVGMVVP. An N-linked (GlcNAc...) asparagine glycan is attached at N45. An intrachain disulfide couples C90 to C157.

It belongs to the heparin-binding growth factors family. In terms of assembly, interacts with FGFR1, FGFR2 and FGFR4. Affinity between fibroblast growth factors (FGFs) and their receptors is increased by heparan sulfate glycosaminoglycans that function as coreceptors. As to expression, leukemia cell lines with platelet/ megakaryocytic differentiation potential.

It localises to the secreted. The protein localises to the extracellular space. In terms of biological role, plays an important role in the regulation of cell proliferation, cell differentiation, angiogenesis and myogenesis, and is required for normal muscle regeneration. The sequence is that of Fibroblast growth factor 6 (FGF6) from Homo sapiens (Human).